A 360-amino-acid polypeptide reads, in one-letter code: Phospho-N-acetylmuramoyl-pentapeptide-transferase (360 aa).

Helical transmembrane passes span 21 to 41, 73 to 93, 94 to 114, 145 to 165, 168 to 188, 199 to 219, 236 to 256, 263 to 283, 288 to 308, and 339 to 359; these read YLTLRVILGTLTALMLCLWLG, TMGGAMILIAIAVSTLLWGDL, TNHYVWLVLAVTLGFGAIGWV, AVTLYLTAASPVEVSLIVPLF, VVVPLGLFYIVLTYFVIVGSS, GLAIMPTVLVAMGLAIFAYAS, AGELAVFCGTIAGAGLGFLWF, VFMGDVGALALGAALGVVAVI, IVLFIMGGVFVMETVSVMLQV, and IVRFWIITVVLVLLGLATLKI.

This sequence belongs to the glycosyltransferase 4 family. MraY subfamily. Mg(2+) is required as a cofactor.

The protein resides in the cell inner membrane. It carries out the reaction UDP-N-acetyl-alpha-D-muramoyl-L-alanyl-gamma-D-glutamyl-meso-2,6-diaminopimeloyl-D-alanyl-D-alanine + di-trans,octa-cis-undecaprenyl phosphate = di-trans,octa-cis-undecaprenyl diphospho-N-acetyl-alpha-D-muramoyl-L-alanyl-D-glutamyl-meso-2,6-diaminopimeloyl-D-alanyl-D-alanine + UMP. Its pathway is cell wall biogenesis; peptidoglycan biosynthesis. Catalyzes the initial step of the lipid cycle reactions in the biosynthesis of the cell wall peptidoglycan: transfers peptidoglycan precursor phospho-MurNAc-pentapeptide from UDP-MurNAc-pentapeptide onto the lipid carrier undecaprenyl phosphate, yielding undecaprenyl-pyrophosphoryl-MurNAc-pentapeptide, known as lipid I. This Chromohalobacter salexigens (strain ATCC BAA-138 / DSM 3043 / CIP 106854 / NCIMB 13768 / 1H11) protein is Phospho-N-acetylmuramoyl-pentapeptide-transferase.